Here is a 625-residue protein sequence, read N- to C-terminus: Glucokinase regulatory protein (625 aa).

SIS domains lie at 90 to 286 (VQEV…QGIA) and 320 to 499 (VSTS…LLGK). Residues 109-110 (TS), glutamate 153, and 179-181 (SVG) each bind beta-D-fructose 1-phosphate. 109–110 (TS) contributes to the beta-D-fructose 6-phosphate binding site. 179 to 181 (SVG) is a binding site for beta-D-fructose 6-phosphate. The segment at 199 to 200 (AV) is important for interaction with GCK. Glutamate 348 is a beta-D-fructose 1-phosphate binding site. The tract at residues 463-465 (LLF) is essential for interaction with GCK. Lysine 514 is a beta-D-fructose 1-phosphate binding site. Lysine 514 serves as a coordination point for beta-D-fructose 6-phosphate.

It belongs to the GCKR family. In terms of assembly, interacts (fructose 6-phosphate bound form) with GCK. As to expression, found in liver and pancreas. Not detected in muscle, brain, heart, thymus, intestine, uterus, adipose tissue, kidney, adrenal, lung or spleen.

It is found in the cytoplasm. It localises to the nucleus. Its subcellular location is the mitochondrion. Regulates glucokinase (GCK) by forming an inactive complex with this enzyme. Acts by promoting GCK recruitment to the nucleus, possibly to provide a reserve of GCK that can be quickly released in the cytoplasm after a meal. The affinity of GCKR for GCK is modulated by fructose metabolites: GCKR with bound fructose 6-phosphate has increased affinity for GCK, while GCKR with bound fructose 1-phosphate has strongly decreased affinity for GCK and does not inhibit GCK activity. This is Glucokinase regulatory protein from Homo sapiens (Human).